Consider the following 208-residue polypeptide: CASP-like protein 2A1 (208 aa).

At 1 to 36 (MSKMAEQKAAAVDGLGGAGAADAAPAGEAAAARVRP) the chain is on the cytoplasmic side. Residues 37 to 57 (VETLLRAAPLGLCVAAMTVML) traverse the membrane as a helical segment. The Extracellular segment spans residues 58-78 (RDQQSNEYGTVAYSDLGGFKY). A helical transmembrane segment spans residues 79–99 (LVYANGLCAAYSLVSAFYTAV). The Cytoplasmic portion of the chain corresponds to 100–108 (PRPATVSRS). The helical transmembrane segment at 109–129 (WVVFLLDQVFTYLILAAGAAA) threads the bilayer. The Extracellular segment spans residues 130 to 161 (AELLYLAYNGDKEVTWSEACGVFGSFCRQART). Residues 162–182 (SVAITFGTVLCFILLSLISSY) form a helical membrane-spanning segment. Residues 183-208 (RLFSAYEAPPSSALGSKGVEIAAYPR) are Cytoplasmic-facing.

Belongs to the Casparian strip membrane proteins (CASP) family. Homodimer and heterodimers.

Its subcellular location is the cell membrane. The sequence is that of CASP-like protein 2A1 from Sorghum bicolor (Sorghum).